Consider the following 200-residue polypeptide: NADH-quinone oxidoreductase subunit B (200 aa).

Cysteine 78, cysteine 79, cysteine 144, and cysteine 174 together coordinate [4Fe-4S] cluster.

This sequence belongs to the complex I 20 kDa subunit family. As to quaternary structure, NDH-1 is composed of 14 different subunits. Subunits NuoB, C, D, E, F, and G constitute the peripheral sector of the complex. It depends on [4Fe-4S] cluster as a cofactor.

It is found in the cell membrane. It carries out the reaction a quinone + NADH + 5 H(+)(in) = a quinol + NAD(+) + 4 H(+)(out). In terms of biological role, NDH-1 shuttles electrons from NADH, via FMN and iron-sulfur (Fe-S) centers, to quinones in the respiratory chain. The immediate electron acceptor for the enzyme in this species is believed to be ubiquinone. Couples the redox reaction to proton translocation (for every two electrons transferred, four hydrogen ions are translocated across the cytoplasmic membrane), and thus conserves the redox energy in a proton gradient. This chain is NADH-quinone oxidoreductase subunit B, found in Dehalococcoides mccartyi (strain ATCC BAA-2100 / JCM 16839 / KCTC 5957 / BAV1).